The primary structure comprises 364 residues: Aminomethyltransferase (364 aa).

This sequence belongs to the GcvT family. As to quaternary structure, the glycine cleavage system is composed of four proteins: P, T, L and H.

It catalyses the reaction N(6)-[(R)-S(8)-aminomethyldihydrolipoyl]-L-lysyl-[protein] + (6S)-5,6,7,8-tetrahydrofolate = N(6)-[(R)-dihydrolipoyl]-L-lysyl-[protein] + (6R)-5,10-methylene-5,6,7,8-tetrahydrofolate + NH4(+). The glycine cleavage system catalyzes the degradation of glycine. The chain is Aminomethyltransferase from Escherichia coli O127:H6 (strain E2348/69 / EPEC).